We begin with the raw amino-acid sequence, 133 residues long: Peptide methionine sulfoxide reductase MsrB (133 aa).

The 123-residue stretch at 8-130 folds into the MsrB domain; it reads LEEWRAMLDP…NSVCLDFKPR (123 aa). Residues cysteine 47, cysteine 50, cysteine 96, and cysteine 99 each contribute to the Zn(2+) site. Cysteine 119 serves as the catalytic Nucleophile.

The protein belongs to the MsrB Met sulfoxide reductase family. Zn(2+) is required as a cofactor.

The catalysed reaction is L-methionyl-[protein] + [thioredoxin]-disulfide + H2O = L-methionyl-(R)-S-oxide-[protein] + [thioredoxin]-dithiol. This Pseudomonas putida (strain W619) protein is Peptide methionine sulfoxide reductase MsrB.